We begin with the raw amino-acid sequence, 695 residues long: Amphiphysin (695 aa).

Coiled-coil stretches lie at residues 10–83 (AKNV…SLHE) and 144–191 (DYDS…QEEL). The region spanning 24 to 240 (VLQKLGKADE…MTKLGDQHAD (217 aa)) is the BAR domain. 2 disordered regions span residues 244–312 (TIQG…VTPT) and 486–617 (GAPG…EASQ). Ser252 is subject to Phosphoserine. Thr260 carries the phosphothreonine modification. The span at 261–274 (PSPPEEPSPLPSPT) shows a compositional bias: pro residues. Phosphoserine occurs at positions 262, 268, 272, and 276. Thr280 is modified (phosphothreonine). Phosphoserine occurs at positions 506 and 638. Residues 622–695 (GFLYKVETLH…FPENFTRRLD (74 aa)) enclose the SH3 domain.

In terms of assembly, heterodimer with BIN1. Binds SH3GLB1. Interacts with REPS1 and SGIP1. Binds AP2A2. Interacts with AP2B1. Interacts with DNM1 and SYNJ1. Neurons, certain endocrine cell types and spermatocytes.

Its subcellular location is the cytoplasmic vesicle. It localises to the secretory vesicle. The protein resides in the synaptic vesicle membrane. The protein localises to the cytoplasm. It is found in the cytoskeleton. Functionally, may participate in mechanisms of regulated exocytosis in synapses and certain endocrine cell types. May control the properties of the membrane associated cytoskeleton. This chain is Amphiphysin (AMPH), found in Homo sapiens (Human).